A 613-amino-acid polypeptide reads, in one-letter code: Dihydroxy-acid dehydratase (613 aa).

D81 provides a ligand contact to Mg(2+). C122 lines the [2Fe-2S] cluster pocket. Positions 123 and 124 each coordinate Mg(2+). Position 124 is an N6-carboxylysine (K124). [2Fe-2S] cluster is bound at residue C195. A Mg(2+)-binding site is contributed by E491. The active-site Proton acceptor is the S517.

Belongs to the IlvD/Edd family. In terms of assembly, homodimer. Requires [2Fe-2S] cluster as cofactor. Mg(2+) serves as cofactor.

It carries out the reaction (2R)-2,3-dihydroxy-3-methylbutanoate = 3-methyl-2-oxobutanoate + H2O. It catalyses the reaction (2R,3R)-2,3-dihydroxy-3-methylpentanoate = (S)-3-methyl-2-oxopentanoate + H2O. The protein operates within amino-acid biosynthesis; L-isoleucine biosynthesis; L-isoleucine from 2-oxobutanoate: step 3/4. It participates in amino-acid biosynthesis; L-valine biosynthesis; L-valine from pyruvate: step 3/4. Functionally, functions in the biosynthesis of branched-chain amino acids. Catalyzes the dehydration of (2R,3R)-2,3-dihydroxy-3-methylpentanoate (2,3-dihydroxy-3-methylvalerate) into 2-oxo-3-methylpentanoate (2-oxo-3-methylvalerate) and of (2R)-2,3-dihydroxy-3-methylbutanoate (2,3-dihydroxyisovalerate) into 2-oxo-3-methylbutanoate (2-oxoisovalerate), the penultimate precursor to L-isoleucine and L-valine, respectively. The polypeptide is Dihydroxy-acid dehydratase (Buchnera aphidicola subsp. Melaphis rhois).